The primary structure comprises 94 residues: Co-chaperonin GroES (94 aa).

The protein belongs to the GroES chaperonin family. In terms of assembly, heptamer of 7 subunits arranged in a ring. Interacts with the chaperonin GroEL.

It is found in the cytoplasm. Together with the chaperonin GroEL, plays an essential role in assisting protein folding. The GroEL-GroES system forms a nano-cage that allows encapsulation of the non-native substrate proteins and provides a physical environment optimized to promote and accelerate protein folding. GroES binds to the apical surface of the GroEL ring, thereby capping the opening of the GroEL channel. In Desulfitobacterium hafniense (strain DSM 10664 / DCB-2), this protein is Co-chaperonin GroES.